Here is a 301-residue protein sequence, read N- to C-terminus: GTPase Era (301 aa).

In terms of domain architecture, Era-type G spans 7–173 (KSGFVALLGR…LNTINKYLPE (167 aa)). Residues 15–22 (GRPNVGKS) are G1. A GTP-binding site is contributed by 15 to 22 (GRPNVGKS). A G2 region spans residues 41-45 (QTTRN). Positions 62–65 (DTPG) are G3. GTP is bound by residues 62 to 66 (DTPGI) and 123 to 126 (NKVD). Residues 123–126 (NKVD) form a G4 region. Residues 152-154 (ISA) form a G5 region. The KH type-2 domain occupies 204–281 (TSQEVPHATA…NLRLWVKVQH (78 aa)).

It belongs to the TRAFAC class TrmE-Era-EngA-EngB-Septin-like GTPase superfamily. Era GTPase family. In terms of assembly, monomer.

The protein resides in the cytoplasm. It is found in the cell membrane. Functionally, an essential GTPase that binds both GDP and GTP, with rapid nucleotide exchange. Plays a role in 16S rRNA processing and 30S ribosomal subunit biogenesis and possibly also in cell cycle regulation and energy metabolism. The polypeptide is GTPase Era (Lactobacillus helveticus (strain DPC 4571)).